The primary structure comprises 524 residues: 2,3-bisphosphoglycerate-independent phosphoglycerate mutase (524 aa).

Mn(2+)-binding residues include Asp13 and Ser63. The active-site Phosphoserine intermediate is Ser63. Substrate-binding positions include His124, 154-155 (RD), Arg186, Arg192, 262-265 (RADR), and Lys337. The Mn(2+) site is built by Asp404, His408, Asp445, His446, and His464.

This sequence belongs to the BPG-independent phosphoglycerate mutase family. As to quaternary structure, monomer. Mn(2+) serves as cofactor.

It carries out the reaction (2R)-2-phosphoglycerate = (2R)-3-phosphoglycerate. The protein operates within carbohydrate degradation; glycolysis; pyruvate from D-glyceraldehyde 3-phosphate: step 3/5. In terms of biological role, catalyzes the interconversion of 2-phosphoglycerate and 3-phosphoglycerate. The sequence is that of 2,3-bisphosphoglycerate-independent phosphoglycerate mutase from Thermomicrobium roseum (strain ATCC 27502 / DSM 5159 / P-2).